The chain runs to 104 residues: Increased recombination centers protein 13 (104 aa).

Residues 63 to 83 (LVHLFSYVFFLFLLKICVDVL) form a helical membrane-spanning segment.

Its subcellular location is the membrane. May be involved in a pathway contributing to genomic integrity. This chain is Increased recombination centers protein 13 (IRC13), found in Saccharomyces cerevisiae (strain ATCC 204508 / S288c) (Baker's yeast).